Here is a 237-residue protein sequence, read N- to C-terminus: Myb-related protein MYBAS1 (237 aa).

HTH myb-type domains lie at 5–57 (REEM…VNYL) and 58–112 (HPGL…RKKA). A DNA-binding region (H-T-H motif) is located at residues 33-57 (WDFVAKVSGLNRTGKSCRLRWVNYL). Positions 62-65 (KHGR) match the Bipartite nuclear localization signal 1 motif. The H-T-H motif DNA-binding region spans 85–108 (WSRIARRLPGRTDNEIKNYWRTHM). The Bipartite nuclear localization signal 2 motif lies at 109–117 (RKKAQERRG).

It localises to the nucleus. Transcription factor. The protein is Myb-related protein MYBAS1 (MYBAS1) of Oryza sativa subsp. japonica (Rice).